The following is a 283-amino-acid chain: MSSHSDEIEEEQISRIEKGKGKDCQGGIETVICTSPSIVCLTQKLIAEMIGTYFIVFSGCGVVVVNVLYGGTITFPGICVTWGLIVMVMIYSTGHISGAHFNPAVTVTFAIFRRFPWHQVPLYIGAQFAGSLLASLTLRLMFKVTPEAFFGTTPADSPARALVAEIIISFLLMFVISGVATDNRAVGELAGIAVGMTIMVNVFVAGPISGASMNPARSLGPALVMGVYKHIWVYIVGPVLGVISGGFVYNLIRFTDKPLRELTKSASFLRAVSPSHKGSSSKT.

Residue methionine 1 is modified to N-acetylmethionine. 2 helical membrane passes run 45–65 and 70–90; these read LIAE…VVVV and GGTI…MVMI. The NPA 1 motif lies at 102–104; it reads NPA. The next 3 helical transmembrane spans lie at 122-142, 161-181, and 189-209; these read LYIG…RLMF, ALVA…GVAT, and LAGI…GPIS. The NPA 2 motif lies at 214 to 216; it reads NPA. Residues 231 to 251 form a helical membrane-spanning segment; it reads IWVYIVGPVLGVISGGFVYNL. Phosphoserine is present on serine 267.

The protein belongs to the MIP/aquaporin (TC 1.A.8) family. NIP (TC 1.A.8.12) subfamily.

It is found in the membrane. Its function is as follows. Potential aquaporin, which may facilitate the transport of water and small neutral solutes across cell membranes. The protein is Putative aquaporin NIP4-1 (NIP4-1) of Arabidopsis thaliana (Mouse-ear cress).